Consider the following 143-residue polypeptide: Large-conductance mechanosensitive channel (143 aa).

Helical transmembrane passes span 10–30 (FAVKGNVIDLAVGVIIGGAFG), 40–60 (VIMPIVGLVFGRLDFSNLFLV), and 86–106 (GSFITVAVNFLILAFIIFMMV).

Belongs to the MscL family. In terms of assembly, homopentamer.

The protein localises to the cell inner membrane. Channel that opens in response to stretch forces in the membrane lipid bilayer. May participate in the regulation of osmotic pressure changes within the cell. The protein is Large-conductance mechanosensitive channel of Paracidovorax citrulli (strain AAC00-1) (Acidovorax citrulli).